A 375-amino-acid chain; its full sequence is Chaperone protein DnaJ (375 aa).

A J domain is found at 5–70 (DYYEVLGVSR…EKRARYDRFG (66 aa)). Residues 136-214 (GDEVTLRIPK…CRGAGQVQDI (79 aa)) form a CR-type zinc finger. Residues Cys-149, Cys-152, Cys-166, Cys-169, Cys-188, Cys-191, Cys-202, and Cys-205 each contribute to the Zn(2+) site. CXXCXGXG motif repeat units lie at residues 149-156 (CPDCSGSG), 166-173 (CPQCGGSG), 188-195 (CSACRGEG), and 202-209 (CPRCRGAG).

Belongs to the DnaJ family. In terms of assembly, homodimer. Zn(2+) serves as cofactor.

It is found in the cytoplasm. Functionally, participates actively in the response to hyperosmotic and heat shock by preventing the aggregation of stress-denatured proteins and by disaggregating proteins, also in an autonomous, DnaK-independent fashion. Unfolded proteins bind initially to DnaJ; upon interaction with the DnaJ-bound protein, DnaK hydrolyzes its bound ATP, resulting in the formation of a stable complex. GrpE releases ADP from DnaK; ATP binding to DnaK triggers the release of the substrate protein, thus completing the reaction cycle. Several rounds of ATP-dependent interactions between DnaJ, DnaK and GrpE are required for fully efficient folding. Also involved, together with DnaK and GrpE, in the DNA replication of plasmids through activation of initiation proteins. The protein is Chaperone protein DnaJ of Oleidesulfovibrio alaskensis (strain ATCC BAA-1058 / DSM 17464 / G20) (Desulfovibrio alaskensis).